Here is a 162-residue protein sequence, read N- to C-terminus: Transcriptional repressor NrdR (162 aa).

The segment at 3-34 (CPYCHHTDSRVLESRSAEGGQSIRRRRECLAC) is a zinc-finger region. The 91-residue stretch at 49–139 (ITVIKRNGDR…VYRQFQGISD (91 aa)) folds into the ATP-cone domain.

This sequence belongs to the NrdR family. Requires Zn(2+) as cofactor.

In terms of biological role, negatively regulates transcription of bacterial ribonucleotide reductase nrd genes and operons by binding to NrdR-boxes. The chain is Transcriptional repressor NrdR from Thermosynechococcus vestitus (strain NIES-2133 / IAM M-273 / BP-1).